Here is a 365-residue protein sequence, read N- to C-terminus: MSEEDQGSGTTTGCGLPSIEQMLAANPGKTPISLLQEYGTRIGKTPVYDLLKAEGQAHQPNFTFRVTVGDTSCTGQGPSKKAAKHKAAEVALKHLKGGSMLEPALEDSSSFSLLDSSPPEDTPVVAAEAAAPVPSAVLTRSPPMEMQPPVSPQQSECNPVGALQELVVQKGWRLPEYMVTQESGPAHRKEFTMTCRVERFIEIGSGTSKKLAKRNAAAKMLLRVHTVPLDARDGNEAEPDDDHFSIGVSSRLDGLRNRGPGCTWDSLRNSVGEKILSLRSCSVGSLGALGSACCSVLSELSEEQAFHVSYLDIEELSLSGLCQCLVELSTQPATVCYGSATTREAARGDAAHRALQYLRIMAGSK.

3 sufficient for interaction with PRKRA regions span residues 22-105, 151-233, and 286-365; these read MLAA…EPAL, SPQQ…DARD, and LGAL…AGSK. The region spanning 30-97 is the DRBM 1 domain; that stretch reads TPISLLQEYG…AEVALKHLKG (68 aa). Position 151 is a phosphoserine (Ser151). 2 DRBM domains span residues 158 to 226 and 292 to 360; these read NPVG…RVHT and ACCS…YLRI. The segment at 227 to 365 is sufficient for interaction with DICER1; sequence VPLDARDGNE…QYLRIMAGSK (139 aa).

Belongs to the TARBP2 family. In terms of assembly, self-associates. Component of the RISC loading complex (RLC), or micro-RNA (miRNA) loading complex (miRLC), which is composed of DICER1, AGO2 and TARBP2. Note that the trimeric RLC/miRLC is also referred to as RISC. Interacts with EIF2AK2/PKR and inhibits its protein kinase activity. Interacts with DHX9. Interacts with DICER1 and PRKRA. Interacts with DICER1, AGO2, MOV10, EIF6 and RPL7A (60S ribosome subunit); they form a large RNA-induced silencing complex (RISC). Interacts with IRF7; this interaction prevents IRF7 phosphorylation and activation.

It is found in the cytoplasm. Its subcellular location is the perinuclear region. It localises to the nucleus. Functionally, required for formation of the RNA induced silencing complex (RISC). Component of the RISC loading complex (RLC), also known as the micro-RNA (miRNA) loading complex (miRLC), which is composed of DICER1, AGO2 and TARBP2. Within the RLC/miRLC, DICER1 and TARBP2 are required to process precursor miRNAs (pre-miRNAs) to mature miRNAs and then load them onto AGO2. AGO2 bound to the mature miRNA constitutes the minimal RISC and may subsequently dissociate from DICER1 and TARBP2. May also play a role in the production of short interfering RNAs (siRNAs) from double-stranded RNA (dsRNA) by DICER1. Binds in vitro to the PRM1 3'-UTR. Seems to act as a repressor of translation. For some pre-miRNA substrates, may also alter the choice of cleavage site by DICER1. Negatively regulates IRF7-mediated IFN-beta signaling triggered by viral infection by inhibiting the phosphorylation of IRF7 and promoting its 'Lys'-48-linked ubiquitination and degradation. In Mus musculus (Mouse), this protein is RISC-loading complex subunit TARBP2 (Tarbp2).